The following is a 195-amino-acid chain: 3-isopropylmalate dehydratase small subunit (195 aa).

It belongs to the LeuD family. LeuD type 1 subfamily. Heterodimer of LeuC and LeuD.

The enzyme catalyses (2R,3S)-3-isopropylmalate = (2S)-2-isopropylmalate. It participates in amino-acid biosynthesis; L-leucine biosynthesis; L-leucine from 3-methyl-2-oxobutanoate: step 2/4. Catalyzes the isomerization between 2-isopropylmalate and 3-isopropylmalate, via the formation of 2-isopropylmaleate. The sequence is that of 3-isopropylmalate dehydratase small subunit from Karelsulcia muelleri (strain GWSS) (Sulcia muelleri).